Reading from the N-terminus, the 566-residue chain is Peroxisomal leader peptide-processing protease (566 aa).

A serine protease region spans residues 319–531 (ALAALLPPEV…LQPALQQYSQ (213 aa)). Residues His-372, Asp-408, and Ser-481 each act as charge relay system in the active site.

It belongs to the peptidase S1B family. In terms of assembly, homodimer. Forms a heterodimer with the C-terminal cleavage product (45 kDa form). Forms a heterodimer with the N-terminal cleavage product (15 kDa form). Interacts with PEX5. Interacts with LONP2. Post-translationally, self-cleavage gives rise to an N-terminal 15-kDa fragment and C-terminal 45-kDa fragment upon import into the peroxisomes. The full-lengh TYSND1 is the active the proteolytic processing of PTS1- and PTS2-proteins and in self-cleavage, and intermolecular self-cleavage of TYSND1 down-regulates its protease activity.

The protein resides in the peroxisome. Its function is as follows. Peroxisomal protease that mediates both the removal of the leader peptide from proteins containing a PTS2 target sequence and processes several PTS1-containing proteins. Catalyzes the processing of PTS1-proteins involved in the peroxisomal beta-oxidation of fatty acids. The polypeptide is Peroxisomal leader peptide-processing protease (TYSND1) (Homo sapiens (Human)).